A 311-amino-acid polypeptide reads, in one-letter code: uncharacterized protein (311 aa).

The next 10 helical transmembrane spans lie at 6–26 (IFIL…KMLA), 33–53 (PFQV…PMAV), 70–90 (YLAL…QFAV), 97–117 (TAAV…YFIL), 123–143 (GITI…FNPA), 155–175 (LIGI…TVIS), 185–205 (YVFN…LLVV), 219–239 (ILVL…CYLG), 244–264 (TSAV…TVLA), and 265–285 (ILIL…FIII). 2 EamA domains span residues 12 to 141 (AIFY…IIFN) and 166 to 292 (VVWS…INYS).

The protein belongs to the EamA transporter family.

Its subcellular location is the cell membrane. This is an uncharacterized protein from Clostridium kluyveri (strain ATCC 8527 / DSM 555 / NBRC 12016 / NCIMB 10680 / K1).